The chain runs to 275 residues: Formamidopyrimidine-DNA glycosylase (275 aa).

The Schiff-base intermediate with DNA role is filled by Pro2. Glu3 serves as the catalytic Proton donor. The active-site Proton donor; for beta-elimination activity is Lys58. Residues His91, Arg109, and Arg154 each contribute to the DNA site. The FPG-type zinc-finger motif lies at 240 to 274 (AVYERAGLPCRVCGTPIRRLVQGQRATYFCPSCQK). Arg264 acts as the Proton donor; for delta-elimination activity in catalysis.

Belongs to the FPG family. As to quaternary structure, monomer. It depends on Zn(2+) as a cofactor.

The enzyme catalyses Hydrolysis of DNA containing ring-opened 7-methylguanine residues, releasing 2,6-diamino-4-hydroxy-5-(N-methyl)formamidopyrimidine.. It carries out the reaction 2'-deoxyribonucleotide-(2'-deoxyribose 5'-phosphate)-2'-deoxyribonucleotide-DNA = a 3'-end 2'-deoxyribonucleotide-(2,3-dehydro-2,3-deoxyribose 5'-phosphate)-DNA + a 5'-end 5'-phospho-2'-deoxyribonucleoside-DNA + H(+). Functionally, involved in base excision repair of DNA damaged by oxidation or by mutagenic agents. Acts as a DNA glycosylase that recognizes and removes damaged bases. Has a preference for oxidized purines, such as 7,8-dihydro-8-oxoguanine (8-oxoG). Has AP (apurinic/apyrimidinic) lyase activity and introduces nicks in the DNA strand. Cleaves the DNA backbone by beta-delta elimination to generate a single-strand break at the site of the removed base with both 3'- and 5'-phosphates. In Bordetella pertussis (strain Tohama I / ATCC BAA-589 / NCTC 13251), this protein is Formamidopyrimidine-DNA glycosylase.